Reading from the N-terminus, the 238-residue chain is Ribonuclease PH (238 aa).

The interval P67–T87 is disordered. Phosphate is bound by residues R86 and G124–R126.

The protein belongs to the RNase PH family. As to quaternary structure, homohexameric ring arranged as a trimer of dimers.

It catalyses the reaction tRNA(n+1) + phosphate = tRNA(n) + a ribonucleoside 5'-diphosphate. Functionally, phosphorolytic 3'-5' exoribonuclease that plays an important role in tRNA 3'-end maturation. Removes nucleotide residues following the 3'-CCA terminus of tRNAs; can also add nucleotides to the ends of RNA molecules by using nucleoside diphosphates as substrates, but this may not be physiologically important. Probably plays a role in initiation of 16S rRNA degradation (leading to ribosome degradation) during starvation. In Ralstonia nicotianae (strain ATCC BAA-1114 / GMI1000) (Ralstonia solanacearum), this protein is Ribonuclease PH.